The following is a 331-amino-acid chain: Adenosine deaminase (331 aa).

Zn(2+) is bound by residues His-12 and His-14. Residues His-14, Asp-16, and Gly-170 each coordinate substrate. His-197 serves as a coordination point for Zn(2+). Glu-200 serves as the catalytic Proton donor. Asp-278 contacts Zn(2+). Residue Asp-279 coordinates substrate.

Belongs to the metallo-dependent hydrolases superfamily. Adenosine and AMP deaminases family. Adenosine deaminase subfamily. Zn(2+) serves as cofactor.

It carries out the reaction adenosine + H2O + H(+) = inosine + NH4(+). The catalysed reaction is 2'-deoxyadenosine + H2O + H(+) = 2'-deoxyinosine + NH4(+). Functionally, catalyzes the hydrolytic deamination of adenosine and 2-deoxyadenosine. The sequence is that of Adenosine deaminase from Shewanella sp. (strain ANA-3).